We begin with the raw amino-acid sequence, 227 residues long: Ribonuclease 3 (227 aa).

The RNase III domain maps to 4–133 (FEELEKLLDY…LIAAIYLDSD (130 aa)). A Mg(2+)-binding site is contributed by Glu46. Asp50 is a catalytic residue. Asn119 and Glu122 together coordinate Mg(2+). Glu122 is a catalytic residue. The DRBM domain maps to 158–226 (DPKTALQEWA…ARELLHKLKL (69 aa)).

Belongs to the ribonuclease III family. Homodimer. Requires Mg(2+) as cofactor.

It localises to the cytoplasm. The catalysed reaction is Endonucleolytic cleavage to 5'-phosphomonoester.. Functionally, digests double-stranded RNA. Involved in the processing of primary rRNA transcript to yield the immediate precursors to the large and small rRNAs (23S and 16S). Processes some mRNAs, and tRNAs when they are encoded in the rRNA operon. Processes pre-crRNA and tracrRNA of type II CRISPR loci if present in the organism. This Rickettsia bellii (strain OSU 85-389) protein is Ribonuclease 3.